Reading from the N-terminus, the 565-residue chain is Translation machinery-associated protein 64 (565 aa).

The region spanning 89–170 is the PUA domain; that stretch reads LPIVLTHGFV…VAVKIIHHFN (82 aa). The SWIB/MDM2 domain maps to 362–447; the sequence is TLYKPFNLAK…GEILHPLLTN (86 aa). The 73-residue stretch at 475–547 folds into the SUI1 domain; it reads IKIITEMKIG…SIIDHLNKLG (73 aa).

It belongs to the eIF2D family. Interacts with the 40S ribosomal subunit.

The sequence is that of Translation machinery-associated protein 64 (TMA64) from Saccharomyces cerevisiae (strain ATCC 204508 / S288c) (Baker's yeast).